The following is a 331-amino-acid chain: tRNA-cytidine(32) 2-sulfurtransferase (331 aa).

Residues 73–78 carry the PP-loop motif motif; that stretch reads SGGKDS. Residues Cys-148, Cys-151, and Cys-239 each coordinate [4Fe-4S] cluster.

The protein belongs to the TtcA family. Homodimer. Mg(2+) serves as cofactor. The cofactor is [4Fe-4S] cluster.

It is found in the cytoplasm. The enzyme catalyses cytidine(32) in tRNA + S-sulfanyl-L-cysteinyl-[cysteine desulfurase] + AH2 + ATP = 2-thiocytidine(32) in tRNA + L-cysteinyl-[cysteine desulfurase] + A + AMP + diphosphate + H(+). The protein operates within tRNA modification. Catalyzes the ATP-dependent 2-thiolation of cytidine in position 32 of tRNA, to form 2-thiocytidine (s(2)C32). The sulfur atoms are provided by the cysteine/cysteine desulfurase (IscS) system. In Burkholderia mallei (strain NCTC 10247), this protein is tRNA-cytidine(32) 2-sulfurtransferase.